Here is a 466-residue protein sequence, read N- to C-terminus: MSTRSVSSSSYRRMFGGSGTSSRPSSNRSYVTTSTRTYSLGSALRPSTSRSLYSSSPGGAYVTRSSAVRLRSSVPGVRLLQDSVDFSLADAINTEFKNTRTNEKVELQELNDRFANYIDKVRFLEQQNKILLAELEQLKGQGKSRLGDLYEEEMRELRRQVDQLTNDKARVEVERDNLAEDIMRLREKLQEEMLQREEAESTLQSFRQDVDNASLARLDLERKVESLQEEIAFLKKLHDEEIQELQAQIQEQHVQIDVDVSKPDLTAALRDVRQQYESVAAKNLQEAEEWYKSKFADLSEAANRNNDALRQAKQESNEYRRQVQSLTCEVDALKGTNESLERQMREMEENFALEAANYQDTIGRLQDEIQNMKEEMARHLREYQDLLNVKMALDIEIATYRKLLEGEESRISLPLPTFSSLNLRETNLESLPLVDTHSKRTLLIKTVETRDGQVINETSQHHDDLE.

Low complexity-rich tracts occupy residues 1–13 and 20–33; these read MSTR…SYRR and TSSR…YVTT. The interval 1 to 33 is disordered; that stretch reads MSTRSVSSSSYRRMFGGSGTSSRPSSNRSYVTT. S2 bears the N-acetylserine mark. Residues 2-95 form a head region; that stretch reads STRSVSSSSY…FSLADAINTE (94 aa). Residue S5 is modified to Phosphoserine. The residue at position 7 (S7) is a Phosphoserine; by PKA and PKC; alternate. S7 is a glycosylation site (O-linked (GlcNAc) serine; alternate). Residue S8 is modified to Phosphoserine. Residues S9 and S10 each carry the phosphoserine; by PKC modification. T20 carries the phosphothreonine modification. S21 carries the post-translational modification Phosphoserine; by PKC. The residue at position 25 (S25) is a Phosphoserine; by PKA and PKC. Phosphoserine; by PKC is present on S26. An O-linked (GlcNAc) threonine glycan is attached at T33. A glycan (O-linked (GlcNAc) serine; alternate) is linked at S34. The residue at position 34 (S34) is a Phosphoserine; by PKC; alternate. A Phosphoserine; by CaMK2, PKA, PKC and ROCK2 modification is found at S39. The residue at position 42 (S42) is a Phosphoserine; by PKC. The residue at position 47 (S47) is a Phosphoserine; by PKA. S49 carries the phosphoserine modification. S51 is subject to Phosphoserine; by PKA and PKC. Position 53 is a phosphotyrosine (Y53). A phosphoserine mark is found at S55 and S56. Residue Y61 is modified to Phosphotyrosine. The residue at position 66 (S66) is a Phosphoserine; by PKA and PKC. Residue S72 is modified to Phosphoserine; by AURKB and ROCK2. S73 carries the phosphoserine modification. S83 bears the Phosphoserine; by CaMK2 mark. S87 bears the Phosphoserine mark. Residues 96-131 form a coil 1A region; it reads FKNTRTNEKVELQELNDRFANYIDKVRFLEQQNKIL. A coiled-coil region spans residues 96–131; the sequence is FKNTRTNEKVELQELNDRFANYIDKVRFLEQQNKIL. Residues 103 to 411 form the IF rod domain; it reads EKVELQELND…KLLEGEESRI (309 aa). A Glycyl lysine isopeptide (Lys-Gly) (interchain with G-Cter in SUMO2) cross-link involves residue K104. Y117 carries the post-translational modification Phosphotyrosine. N6-acetyllysine; alternate is present on residues K120, K129, and K139. An N6-succinyllysine; alternate mark is found at K120 and K129. Residues K120, K129, and K139 each participate in a glycyl lysine isopeptide (Lys-Gly) (interchain with G-Cter in SUMO2); alternate cross-link. A linker 1 region spans residues 132–153; that stretch reads LAELEQLKGQGKSRLGDLYEEE. A Phosphoserine modification is found at S144. Residues 154–245 are a coiled coil; that stretch reads MRELRRQVDQ…KLHDEEIQEL (92 aa). The coil 1B stretch occupies residues 154-245; that stretch reads MRELRRQVDQ…KLHDEEIQEL (92 aa). K168 is subject to N6-acetyllysine. At K188 the chain carries N6-acetyllysine; alternate. K188 is modified (N6-succinyllysine; alternate). S214 bears the Phosphoserine mark. K223 carries the N6-acetyllysine; alternate modification. A Glycyl lysine isopeptide (Lys-Gly) (interchain with G-Cter in SUMO2); alternate cross-link involves residue K223. Phosphoserine is present on S226. K235 is modified (N6-acetyllysine). Residues 246 to 268 form a linker 12 region; sequence QAQIQEQHVQIDVDVSKPDLTAA. K262 is covalently cross-linked (Glycyl lysine isopeptide (Lys-Gly) (interchain with G-Cter in SUMO2)). The tract at residues 269–407 is coil 2; the sequence is LRDVRQQYES…ATYRKLLEGE (139 aa). An N6-acetyllysine; alternate modification is found at K294. K294 bears the N6-succinyllysine; alternate mark. K294 is covalently cross-linked (Glycyl lysine isopeptide (Lys-Gly) (interchain with G-Cter in SUMO2); alternate). S299 is modified (phosphoserine). Positions 303–407 form a coiled coil; the sequence is NRNNDALRQA…ATYRKLLEGE (105 aa). A Glycyl lysine isopeptide (Lys-Gly) (interchain with G-Cter in SUMO2) cross-link involves residue K313. A Phosphoserine modification is found at S325. The [IL]-x-C-x-x-[DE] motif signature appears at 326-329; sequence LTCE. The residue at position 373 (K373) is an N6-acetyllysine; alternate. K373 participates in a covalent cross-link: Glycyl lysine isopeptide (Lys-Gly) (interchain with G-Cter in SUMO2); alternate. Positions 408-466 are tail; sequence ESRISLPLPTFSSLNLRETNLESLPLVDTHSKRTLLIKTVETRDGQVINETSQHHDDLE. A phosphoserine mark is found at S409, S412, S419, and S420. T426 bears the Phosphothreonine mark. Phosphoserine is present on S430. T436 bears the Phosphothreonine mark. S438 is modified (phosphoserine). K439 is covalently cross-linked (Glycyl lysine isopeptide (Lys-Gly) (interchain with G-Cter in SUMO2)). K445 is modified (N6-acetyllysine; alternate). N6-succinyllysine; alternate is present on K445. A Glycyl lysine isopeptide (Lys-Gly) (interchain with G-Cter in SUMO2); alternate cross-link involves residue K445. K445 is covalently cross-linked (Glycyl lysine isopeptide (Lys-Gly) (interchain with G-Cter in SUMO1); alternate). T446 and T458 each carry phosphothreonine. S459 is subject to Phosphoserine.

This sequence belongs to the intermediate filament family. Homomer assembled from elementary dimers. Identified in complexes that contain VIM, EZR, AHNAK, BFSP1, BFSP2, ANK2, PLEC, PRX and spectrin. Interacts with BCAS3. Interacts with LGSN. Interacts with SYNM. Interacts (via rod region) with PLEC (via CH 1 domain). Interacts with PLEC isoform 1C. Interacts with STK33. Interacts with LARP6. Interacts with RAB8B. Interacts with TOR1A; the interaction associates TOR1A with the cytoskeleton. Interacts with TOR1AIP1. Interacts with DIAPH1. Interacts with EPPK1; interaction is dependent of higher-order structure of intermediate filament. Interacts with the non-receptor tyrosine kinase SRMS; the interaction leads to phosphorylation of VIM. Interacts with NOD2. Interacts (via head region) with CORO1C. Interacts with HDGF. Interacts with PRKCE (via phorbol-ester/DAG-type 2 domain). Interacts with BFSP2. Interacts with PPL. Interacts with PKP1 and PKP2. Interacts with SCRIB (via PDZ domains); the interaction protects SCRIB from proteasomal degradation and facilitates SCRIB localization to intermediate filaments, the interaction is reduced by cell contact inhibition. Phosphorylation by PKN1 inhibits the formation of filaments. Filament disassembly during mitosis is promoted by phosphorylation at Ser-55 as well as by nestin. One of the most prominent phosphoproteins in various cells of mesenchymal origin. Phosphorylation is enhanced during cell division, at which time vimentin filaments are significantly reorganized. Phosphorylated at Ser-56 by CDK5 during neutrophil secretion in the cytoplasm. Phosphorylated by STK33. Phosphorylated on tyrosine residues by SRMS. In terms of processing, S-nitrosylation is induced by interferon-gamma and oxidatively-modified low-densitity lipoprotein (LDL(ox)) possibly implicating the iNOS-S100A8/9 transnitrosylase complex. In terms of tissue distribution, detected in eye lens fiber cells (at protein level). Expressed in retinal lens epithelial cells (at protein level). Expressed in Langerhans cells in the epidermis (at protein level).

The protein resides in the cytoplasm. It localises to the cytoskeleton. It is found in the nucleus matrix. Its subcellular location is the cell membrane. In terms of biological role, vimentins are class-III intermediate filaments found in various non-epithelial cells, especially mesenchymal cells. Vimentin is attached to the nucleus, endoplasmic reticulum, and mitochondria, either laterally or terminally. Plays a role in cell directional movement, orientation, cell sheet organization and Golgi complex polarization at the cell migration front. Protects SCRIB from proteasomal degradation and facilitates its localization to intermediate filaments in a cell contact-mediated manner. Its function is as follows. Involved with LARP6 in the stabilization of type I collagen mRNAs for CO1A1 and CO1A2. The protein is Vimentin of Mus musculus (Mouse).